The sequence spans 418 residues: MKVLDELRDLVEDAIKGSTVFEKSKVLTPDYIPKNLPHREKQIKELSINFREILSNPGSTSVRVVISGKTGTGKTVTTKKFGELFSEIAKEKGLRVVYTHINCHRQRTLYLMLVEIANQLNLQIPNRGLSSQETFKLIYDYLEKRNIQLIITLDEFDYFVSTSPVEDIYFLVRIYDELNALVKRIHYIFILRELTSLASLDKSIKDHVIKNVIEFPPYTSEELYDILMDRIVNEKAFREGAVLEETVRFISDIYGIDKGGSGNARLALETLELAGKIADTEGSLLVTIDHAKKANSKINPELSIILDTIRDLDLHQLLVVKAIMNLHKKEGDDFFSMGKVEEEYNIVAKDLGEIPRKHTQVFEYIRKLKLMGLITARQSGKGMRGRTTLISLSVPISEELDNLINNEIRDRLLQQKNY.

Residues Thr-72–Val-76, Tyr-218, and Arg-230 contribute to the ATP site.

It belongs to the CDC6/cdc18 family.

In terms of biological role, involved in regulation of DNA replication. This is ORC1-type DNA replication protein 2 (cdc6-2) from Sulfurisphaera tokodaii (strain DSM 16993 / JCM 10545 / NBRC 100140 / 7) (Sulfolobus tokodaii).